The chain runs to 446 residues: Exodeoxyribonuclease 7 large subunit (446 aa).

The protein belongs to the XseA family. Heterooligomer composed of large and small subunits.

The protein resides in the cytoplasm. It carries out the reaction Exonucleolytic cleavage in either 5'- to 3'- or 3'- to 5'-direction to yield nucleoside 5'-phosphates.. Functionally, bidirectionally degrades single-stranded DNA into large acid-insoluble oligonucleotides, which are then degraded further into small acid-soluble oligonucleotides. This Vibrio cholerae serotype O1 (strain ATCC 39315 / El Tor Inaba N16961) protein is Exodeoxyribonuclease 7 large subunit.